The primary structure comprises 81 residues: ATP synthase subunit C, plastid (81 aa).

A run of 2 helical transmembrane segments spans residues 3 to 23 (PLIPAASVIAAGLAVGLASIG) and 61 to 81 (EALTIYGLVVALALSFANPFI).

The protein belongs to the ATPase C chain family. As to quaternary structure, F-type ATPases have 2 components, F(1) - the catalytic core - and F(0) - the membrane proton channel. F(1) has five subunits: alpha(3), beta(3), gamma(1), delta(1), epsilon(1). F(0) has four main subunits: a(1), b(1), b'(1) and c(10-14). The alpha and beta chains form an alternating ring which encloses part of the gamma chain. F(1) is attached to F(0) by a central stalk formed by the gamma and epsilon chains, while a peripheral stalk is formed by the delta, b and b' chains.

The protein resides in the plastid membrane. F(1)F(0) ATP synthase produces ATP from ADP in the presence of a proton or sodium gradient. F-type ATPases consist of two structural domains, F(1) containing the extramembraneous catalytic core and F(0) containing the membrane proton channel, linked together by a central stalk and a peripheral stalk. During catalysis, ATP synthesis in the catalytic domain of F(1) is coupled via a rotary mechanism of the central stalk subunits to proton translocation. Functionally, key component of the F(0) channel; it plays a direct role in translocation across the membrane. A homomeric c-ring of between 10-14 subunits forms the central stalk rotor element with the F(1) delta and epsilon subunits. The protein is ATP synthase subunit C, plastid of Aneura mirabilis (Parasitic liverwort).